A 343-amino-acid chain; its full sequence is Large ribosomal subunit protein uL3 (343 aa).

Disordered stretches follow at residues 1-31 (MGHR…TPRS) and 238-262 (KGSR…PGQM).

The protein belongs to the universal ribosomal protein uL3 family. In terms of assembly, part of the 50S ribosomal subunit. Forms a cluster with proteins L14 and L24e.

One of the primary rRNA binding proteins, it binds directly near the 3'-end of the 23S rRNA, where it nucleates assembly of the 50S subunit. This Sulfurisphaera tokodaii (strain DSM 16993 / JCM 10545 / NBRC 100140 / 7) (Sulfolobus tokodaii) protein is Large ribosomal subunit protein uL3.